A 340-amino-acid polypeptide reads, in one-letter code: Zinc finger protein 488 (340 aa).

Positions 72 to 187 (AELALLVAPG…SVFPAGESAD (116 aa)) are important for transcriptional repression activity. A disordered region spans residues 77 to 180 (LVAPGKPRPG…AERPELTSVF (104 aa)). The span at 82 to 91 (KPRPGKPLPP) shows a compositional bias: pro residues. The span at 106 to 125 (PRMKDRQVDAQAQEREHDDP) shows a compositional bias: basic and acidic residues. C2H2-type zinc fingers lie at residues 275 to 302 (NWCAKCNLSFRLTSDLVFHMRSHHKKEH) and 317 to 339 (LACPVCQEHFRERHHLSRHMTSH). The Nuclear localization signal motif lies at 298-305 (HKKEHAGP).

It belongs to the krueppel C2H2-type zinc-finger protein family. In terms of assembly, interacts with OLIG2.

The protein resides in the nucleus. Transcriptional repressor. Plays a role in oligodendrocyte differentiation, together with OLIG2. Mediates Notch signaling-activated formation of oligodendrocyte precursors. Promotes differentiation of adult neural stem progenitor cells (NSPCs) into mature oligodendrocytes and contributes to remyelination following nerve injury. This Homo sapiens (Human) protein is Zinc finger protein 488 (ZNF488).